We begin with the raw amino-acid sequence, 182 residues long: Transcription termination/antitermination protein NusG (182 aa).

The protein belongs to the NusG family.

In terms of biological role, participates in transcription elongation, termination and antitermination. The sequence is that of Transcription termination/antitermination protein NusG from Chlamydia trachomatis serovar D (strain ATCC VR-885 / DSM 19411 / UW-3/Cx).